A 509-amino-acid chain; its full sequence is GMP synthase [glutamine-hydrolyzing] (509 aa).

Residues 4–193 (NVLILDFGSQ…LIKIAGTKAT (190 aa)) enclose the Glutamine amidotransferase type-1 domain. C79 serves as the catalytic Nucleophile. Residues H167 and E169 contribute to the active site. Residues 194–384 (WTPGKFVDLT…LGIDKELLGR (191 aa)) enclose the GMPS ATP-PPase domain. 221-227 (SGGVDST) contributes to the ATP binding site.

Homodimer.

It carries out the reaction XMP + L-glutamine + ATP + H2O = GMP + L-glutamate + AMP + diphosphate + 2 H(+). The protein operates within purine metabolism; GMP biosynthesis; GMP from XMP (L-Gln route): step 1/1. Functionally, catalyzes the synthesis of GMP from XMP. The sequence is that of GMP synthase [glutamine-hydrolyzing] from Christiangramia forsetii (strain DSM 17595 / CGMCC 1.15422 / KT0803) (Gramella forsetii).